Reading from the N-terminus, the 491-residue chain is Glutamyl-tRNA(Gln) amidotransferase subunit A (491 aa).

Active-site charge relay system residues include lysine 77 and serine 152. Serine 176 functions as the Acyl-ester intermediate in the catalytic mechanism.

The protein belongs to the amidase family. GatA subfamily. In terms of assembly, heterotrimer of A, B and C subunits.

The catalysed reaction is L-glutamyl-tRNA(Gln) + L-glutamine + ATP + H2O = L-glutaminyl-tRNA(Gln) + L-glutamate + ADP + phosphate + H(+). Functionally, allows the formation of correctly charged Gln-tRNA(Gln) through the transamidation of misacylated Glu-tRNA(Gln) in organisms which lack glutaminyl-tRNA synthetase. The reaction takes place in the presence of glutamine and ATP through an activated gamma-phospho-Glu-tRNA(Gln). The protein is Glutamyl-tRNA(Gln) amidotransferase subunit A of Chlamydia felis (strain Fe/C-56) (Chlamydophila felis).